The chain runs to 163 residues: MIKFTHLVHHHHDEHHHNEEHAHNATELTICLTMQERTKSRLKVMLSDGSEAGLFLPRGTVLKEHDIVESDDGVQAMITAAEETVSTVYSDDLLLLAKACYHLGNRHVPLQVEAGWCRYLHDHVLDDMVQRLGLNVKVEQAKYQPEPGAYGGSSAGSHDGHHH.

Residues 144-163 (QPEPGAYGGSSAGSHDGHHH) form a disordered region.

The protein belongs to the UreE family.

It localises to the cytoplasm. In terms of biological role, involved in urease metallocenter assembly. Binds nickel. Probably functions as a nickel donor during metallocenter assembly. The protein is Urease accessory protein UreE of Aliivibrio fischeri (strain ATCC 700601 / ES114) (Vibrio fischeri).